Here is a 1464-residue protein sequence, read N- to C-terminus: ABC transporter G family member 35 (1464 aa).

The disordered stretch occupies residues 1 to 26; it reads MDAAAEMQKVVSLRRGGGGSSSRGAA. Residues 173-446 enclose the ABC transporter 1 domain; that stretch reads ANALGILPNK…FELMGFKCPE (274 aa). Residue 206 to 213 participates in ATP binding; that stretch reads GPPGSGKT. One can recognise an ABC transmembrane type-2 1 domain in the interval 524 to 737; sequence ELLKANIDRE…AQNAISVNEF (214 aa). Helical transmembrane passes span 542 to 562, 575 to 595, 630 to 650, 662 to 682, 686 to 706, 715 to 735, and 774 to 794; these read FVYI…MTVF, GVIF…NGLS, IPMS…VIGF, LLML…GGAA, IVAN…GGFI, WWIW…ISVN, and IGFG…TLAL. The ABC transporter 2 domain occupies 867 to 1119; sequence LTFDNIKYSV…ELIKYFEGIK (253 aa). 912-919 is an ATP binding site; it reads GVSGAGKT. The ABC transmembrane type-2 2 domain occupies 1192 to 1406; sequence NQCLACLWKM…TLYGLVASQF (215 aa). 7 helical membrane-spanning segments follow: residues 1213–1233, 1243–1263, 1299–1319, 1326–1346, 1356–1376, 1387–1407, and 1436–1456; these read AIRL…FWDL, LFNA…LNSQ, FPYT…MIGF, FFWY…YGMM, VASI…GFII, WYCW…SQFG, and VVAV…GFAI.

The protein belongs to the ABC transporter superfamily. ABCG family. PDR (TC 3.A.1.205) subfamily.

The protein localises to the membrane. Its function is as follows. May be a general defense protein. This Oryza sativa subsp. japonica (Rice) protein is ABC transporter G family member 35.